A 241-amino-acid chain; its full sequence is Superantigen-like protein 13 (241 aa).

A signal peptide spans 1-26; sequence MNNNITKKIILSTTLLLLGTASTQFP.

It belongs to the staphylococcal/streptococcal toxin family. As to quaternary structure, interacts with host FPR2; this interaction promotes neutrophil chemotaxis.

In terms of biological role, acts as a pathogen alarming molecule by acting on host neutrophil chemotactic factors FPR2. Plays a role of chemoattractant and induces degranulation and oxidative burst in neutrophils. This chain is Superantigen-like protein 13, found in Staphylococcus aureus (strain Newman).